We begin with the raw amino-acid sequence, 734 residues long: Translation initiation factor IF-2 (734 aa).

The tract at residues 39–110 is disordered; sequence SKFAPRSSFT…TGKPETKKRE (72 aa). Residues 82 to 110 show a composition bias toward basic and acidic residues; it reads DYEKRKLAEQRATRRLKGDTGKPETKKRE. Residues 238 to 405 form the tr-type G domain; it reads NRPPIVTVMG…SIVLQAEILD (168 aa). The tract at residues 247–254 is G1; it reads GHVDHGKT. 247–254 contributes to the GTP binding site; it reads GHVDHGKT. A G2 region spans residues 272–276; that stretch reads GITQH. Positions 293-296 are G3; sequence DTPG. GTP contacts are provided by residues 293–297 and 347–350; these read DTPGH and NKCD. The interval 347–350 is G4; it reads NKCD. Residues 383–385 form a G5 region; the sequence is SAK.

This sequence belongs to the TRAFAC class translation factor GTPase superfamily. Classic translation factor GTPase family. IF-2 subfamily.

It is found in the cytoplasm. One of the essential components for the initiation of protein synthesis. Protects formylmethionyl-tRNA from spontaneous hydrolysis and promotes its binding to the 30S ribosomal subunits. Also involved in the hydrolysis of GTP during the formation of the 70S ribosomal complex. The chain is Translation initiation factor IF-2 from Pelagibacter ubique (strain HTCC1062).